We begin with the raw amino-acid sequence, 250 residues long: Acetoacetate decarboxylase 1 (250 aa).

Lys120 functions as the Schiff-base intermediate with acetoacetate in the catalytic mechanism.

The protein belongs to the ADC family.

The catalysed reaction is acetoacetate + H(+) = acetone + CO2. Functionally, catalyzes the conversion of acetoacetate to acetone and carbon dioxide. The sequence is that of Acetoacetate decarboxylase 1 from Bradyrhizobium diazoefficiens (strain JCM 10833 / BCRC 13528 / IAM 13628 / NBRC 14792 / USDA 110).